The chain runs to 228 residues: 7-cyano-7-deazaguanine synthase (228 aa).

7-17 lines the ATP pocket; it reads LSGGLDSAVNL. Zn(2+) is bound by residues Cys192, Cys200, Cys203, and Cys206.

This sequence belongs to the QueC family. In terms of assembly, homodimer. Zn(2+) is required as a cofactor.

It carries out the reaction 7-carboxy-7-deazaguanine + NH4(+) + ATP = 7-cyano-7-deazaguanine + ADP + phosphate + H2O + H(+). It participates in purine metabolism; 7-cyano-7-deazaguanine biosynthesis. Functionally, catalyzes the ATP-dependent conversion of 7-carboxy-7-deazaguanine (CDG) to 7-cyano-7-deazaguanine (preQ(0)). This is 7-cyano-7-deazaguanine synthase from Desulforamulus reducens (strain ATCC BAA-1160 / DSM 100696 / MI-1) (Desulfotomaculum reducens).